Consider the following 123-residue polypeptide: UPF0382 membrane protein YwdK (123 aa).

The next 4 helical transmembrane spans lie at 3–23, 49–69, 71–91, and 96–116; these read VFII…AFGA, ALGL…GSVT, AGWL…ILSV, and ILGA…IMIV.

Belongs to the UPF0382 family.

It localises to the cell membrane. This chain is UPF0382 membrane protein YwdK (ywdK), found in Bacillus subtilis (strain 168).